The following is a 593-amino-acid chain: Cryptochrome-2 (593 aa).

In terms of domain architecture, Photolyase/cryptochrome alpha/beta spans Ala-22–Leu-151. A Glycyl lysine isopeptide (Lys-Gly) (interchain with G-Cter in ubiquitin) cross-link involves residue Lys-30. Ser-90 is subject to Phosphoserine. Glycyl lysine isopeptide (Lys-Gly) (interchain with G-Cter in ubiquitin) cross-links involve residues Lys-126 and Lys-242. A Phosphoserine; by MAPK modification is found at Ser-266. Ser-271 is an FAD binding site. A Phosphoserine modification is found at Ser-299. Gln-308 is a binding site for FAD. A Glycyl lysine isopeptide (Lys-Gly) (interchain with G-Cter in ubiquitin) cross-link involves residue Lys-348. FAD-binding positions include His-374 and Asp-406–Asp-408. The interval Trp-390–Ile-489 is required for inhibition of CLOCK-BMAL1-mediated transcription. Residues Lys-475 and Lys-504 each participate in a glycyl lysine isopeptide (Lys-Gly) (interchain with G-Cter in ubiquitin) cross-link. The tract at residues Pro-532 to Ala-593 is disordered. The span at Ser-537–Gly-548 shows a compositional bias: low complexity. Ser-554 is modified (phosphoserine; by GSK3-beta). Phosphoserine; by DYRK1A and MAPK is present on Ser-558.

This sequence belongs to the DNA photolyase class-1 family. As to quaternary structure, component of the circadian core oscillator, which includes the CRY proteins, CLOCK or NPAS2, BMAL1 or BMAL2, CSNK1D and/or CSNK1E, TIMELESS, and the PER proteins. Interacts with TIMELESS. Interacts directly with PER1, PER2 and PER3; interaction with PER2 inhibits its ubiquitination and vice versa. Interacts with CLOCK-BMAL1. Interacts with CLOCK. Interacts with BMAL1. Interacts with NFIL3. Interacts with FBXL3. Interacts with FBXL21. FBXL3, PER2 and the cofactor FAD compete for overlapping binding sites. FBXL3 cannot bind CRY2 that interacts already with PER2 or that contains bound FAD. Interacts with PPP5C (via TPR repeats); the interaction down-regulates the PPP5C phosphatase activity on CSNK1E. Interacts with nuclear receptors AR and NR3C1/GR; the interaction is ligand dependent. Interacts with PRKDC and CIART. Interacts with ISCA1 (in vitro). Interacts with DDB1, USP7 and TARDBP. Interacts with HNF4A. Interacts with PPARA. Interacts with PPARD (via domain NR LBD) and NR1I2 (via domain NR LBD) in a ligand-dependent manner. Interacts with PPARG, NR1I3 and VDR in a ligand-dependent manner. It depends on FAD as a cofactor. (6R)-5,10-methylene-5,6,7,8-tetrahydrofolate serves as cofactor. Phosphorylation on Ser-266 by MAPK is important for the inhibition of CLOCK-BMAL1-mediated transcriptional activity. Phosphorylation by CSKNE requires interaction with PER1 or PER2. Phosphorylated in a circadian manner at Ser-554 and Ser-558 in the suprachiasmatic nucleus (SCN) and liver. Phosphorylation at Ser-558 by DYRK1A promotes subsequent phosphorylation at Ser-554 by GSK3-beta: the two-step phosphorylation at the neighboring Ser residues leads to its proteasomal degradation. In terms of processing, ubiquitinated by the SCF(FBXL3) and SCF(FBXL21) complexes, regulating the balance between degradation and stabilization. The SCF(FBXL3) complex is mainly nuclear and mediates ubiquitination and subsequent degradation of CRY2. In contrast, cytoplasmic SCF(FBXL21) complex-mediated ubiquitination leads to stabilize CRY2 and counteract the activity of the SCF(FBXL3) complex. The SCF(FBXL3) and SCF(FBXL21) complexes probably mediate ubiquitination at different Lys residues. The SCF(FBXL3) complex recognizes and binds CRY2 phosphorylated at Ser-554 and Ser-558. Ubiquitination may be inhibited by PER2. Deubiquitinated by USP7. In terms of tissue distribution, expressed in all tissues examined including fetal brain, fibroblasts, heart, brain, placenta, lung, liver, skeletal muscle, kidney, pancreas, spleen, thymus, prostate, testis, ovary, small intestine, colon and leukocytes. Highest levels in heart and skeletal muscle.

The protein localises to the cytoplasm. It localises to the nucleus. Its activity is regulated as follows. KL001 (N-[3-(9H-carbazol-9-yl)-2-hydroxypropyl]-N-(2-furanylmethyl)-methanesulfonamide) binds to CRY1 and stabilizes it by inhibiting FBXL3- and ubiquitin-dependent degradation of CRY1 resulting in lengthening of the circadian periods. Functionally, transcriptional repressor which forms a core component of the circadian clock. The circadian clock, an internal time-keeping system, regulates various physiological processes through the generation of approximately 24 hour circadian rhythms in gene expression, which are translated into rhythms in metabolism and behavior. It is derived from the Latin roots 'circa' (about) and 'diem' (day) and acts as an important regulator of a wide array of physiological functions including metabolism, sleep, body temperature, blood pressure, endocrine, immune, cardiovascular, and renal function. Consists of two major components: the central clock, residing in the suprachiasmatic nucleus (SCN) of the brain, and the peripheral clocks that are present in nearly every tissue and organ system. Both the central and peripheral clocks can be reset by environmental cues, also known as Zeitgebers (German for 'timegivers'). The predominant Zeitgeber for the central clock is light, which is sensed by retina and signals directly to the SCN. The central clock entrains the peripheral clocks through neuronal and hormonal signals, body temperature and feeding-related cues, aligning all clocks with the external light/dark cycle. Circadian rhythms allow an organism to achieve temporal homeostasis with its environment at the molecular level by regulating gene expression to create a peak of protein expression once every 24 hours to control when a particular physiological process is most active with respect to the solar day. Transcription and translation of core clock components (CLOCK, NPAS2, BMAL1, BMAL2, PER1, PER2, PER3, CRY1 and CRY2) plays a critical role in rhythm generation, whereas delays imposed by post-translational modifications (PTMs) are important for determining the period (tau) of the rhythms (tau refers to the period of a rhythm and is the length, in time, of one complete cycle). A diurnal rhythm is synchronized with the day/night cycle, while the ultradian and infradian rhythms have a period shorter and longer than 24 hours, respectively. Disruptions in the circadian rhythms contribute to the pathology of cardiovascular diseases, cancer, metabolic syndromes and aging. A transcription/translation feedback loop (TTFL) forms the core of the molecular circadian clock mechanism. Transcription factors, CLOCK or NPAS2 and BMAL1 or BMAL2, form the positive limb of the feedback loop, act in the form of a heterodimer and activate the transcription of core clock genes and clock-controlled genes (involved in key metabolic processes), harboring E-box elements (5'-CACGTG-3') within their promoters. The core clock genes: PER1/2/3 and CRY1/2 which are transcriptional repressors form the negative limb of the feedback loop and interact with the CLOCK|NPAS2-BMAL1|BMAL2 heterodimer inhibiting its activity and thereby negatively regulating their own expression. This heterodimer also activates nuclear receptors NR1D1/2 and RORA/B/G, which form a second feedback loop and which activate and repress BMAL1 transcription, respectively. CRY1 and CRY2 have redundant functions but also differential and selective contributions at least in defining the pace of the SCN circadian clock and its circadian transcriptional outputs. Less potent transcriptional repressor in cerebellum and liver than CRY1, though less effective in lengthening the period of the SCN oscillator. Seems to play a critical role in tuning SCN circadian period by opposing the action of CRY1. With CRY1, dispensable for circadian rhythm generation but necessary for the development of intercellular networks for rhythm synchrony. May mediate circadian regulation of cAMP signaling and gluconeogenesis by blocking glucagon-mediated increases in intracellular cAMP concentrations and in CREB1 phosphorylation. Besides its role in the maintenance of the circadian clock, is also involved in the regulation of other processes. Plays a key role in glucose and lipid metabolism modulation, in part, through the transcriptional regulation of genes involved in these pathways, such as LEP or ACSL4. Represses glucocorticoid receptor NR3C1/GR-induced transcriptional activity by binding to glucocorticoid response elements (GREs). Represses the CLOCK-BMAL1 induced transcription of BHLHE40/DEC1. Represses the CLOCK-BMAL1 induced transcription of NAMPT. Represses PPARD and its target genes in the skeletal muscle and limits exercise capacity. Represses the transcriptional activity of NR1I2. The sequence is that of Cryptochrome-2 (CRY2) from Homo sapiens (Human).